The sequence spans 1910 residues: Endoribonuclease dcr-1 (1910 aa).

The Helicase ATP-binding domain occupies 20–201; the sequence is LLDKATKKNT…KLMEQLKKLE (182 aa). 33–40 is an ATP binding site; the sequence is LGTGSGKT. The DEAH box motif lies at 145–148; that stretch reads DECH. A Helicase C-terminal domain is found at 371–542; it reads EFQKERMKLE…TVNNPIEDDS (172 aa). Residues 571–667 form the Dicer dsRNA-binding fold domain; sequence AIALINRYCS…LPKGRESIAK (97 aa). The region spanning 845–1003 is the PAZ domain; the sequence is YVSEVVANME…LVPELMDIHP (159 aa). Disordered stretches follow at residues 951–988, 1227–1248, and 1272–1309; these read RIQNQPRRSRTVSNSSTSNIPQASASDSKESNTSVPHS, TASSSLSQTVQESTVSPPKQLT, and LEMSEDMEKPRRLEDTVNLEDYGDDQENQEDENTPTNF. Composition is skewed to polar residues over residues 970 to 988 and 1227 to 1245; these read IPQASASDSKESNTSVPHS and TASSSLSQTVQESTVSPPK. Residues 1245-1280 are a coiled coil; it reads KQLTKEEEQFKKLQNDLLKQAKERLEALEMSEDMEK. The span at 1272-1286 shows a compositional bias: basic and acidic residues; it reads LEMSEDMEKPRRLED. The span at 1288–1304 shows a compositional bias: acidic residues; sequence VNLEDYGDDQENQEDEN. 2 consecutive RNase III domains span residues 1381–1589 and 1643–1805; these read VSHI…LTLG and FTQL…LDSG. Residues E1682, D1791, and E1794 each coordinate Mg(2+). The 64-residue stretch at 1833–1896 folds into the DRBM domain; it reads SPIRELMEFE…AKRALKYLHQ (64 aa).

This sequence belongs to the helicase family. Dicer subfamily. As to quaternary structure, component of the ERI/DICER complex at least composed of dcr-1, rrf-3 and eri-1. Interacts with pir-1. Mg(2+) is required as a cofactor. Mn(2+) serves as cofactor.

Its function is as follows. Component of the ERI/DICER complex which is involved in processing amplified double-stranded RNA (dsRNA) intermediates during small-RNA-mediated gene-silencing or RNA interference (RNAi). Involved in cleaving dsRNA in the RNAi pathway. It produces 21 to 23 bp dsRNAs (siRNAs) which target the selective destruction of homologous RNAs. Seems to process the precursor of the small temporal RNA let-7 which is involved in developmental timing. Required for avoidance behavior induced by small RNAs derived from pathogenic bacteria such as P.aeruginosa. Involved in innate immunity through its role in small RNA processing. In terms of biological role, tDCR-1 acts as a deoxyribonuclease (DNase) initiating DNA fragmentation during apoptosis, upstream of nucleases cps-6, crn-2 and nuc-1. The chain is Endoribonuclease dcr-1 from Caenorhabditis elegans.